We begin with the raw amino-acid sequence, 333 residues long: Quinolinate synthase (333 aa).

Iminosuccinate is bound by residues H41 and S58. [4Fe-4S] cluster is bound at residue C103. Iminosuccinate contacts are provided by residues 129–131 (YIN) and S146. C189 contributes to the [4Fe-4S] cluster binding site. Residues 215-217 (HPE) and T232 contribute to the iminosuccinate site. C282 lines the [4Fe-4S] cluster pocket.

Belongs to the quinolinate synthase family. Type 2 subfamily. It depends on [4Fe-4S] cluster as a cofactor.

The protein localises to the cytoplasm. It carries out the reaction iminosuccinate + dihydroxyacetone phosphate = quinolinate + phosphate + 2 H2O + H(+). Its pathway is cofactor biosynthesis; NAD(+) biosynthesis; quinolinate from iminoaspartate: step 1/1. In terms of biological role, catalyzes the condensation of iminoaspartate with dihydroxyacetone phosphate to form quinolinate. In Prochlorococcus marinus (strain MIT 9303), this protein is Quinolinate synthase.